A 148-amino-acid chain; its full sequence is Putative carbonic anhydrase (148 aa).

An Alpha-carbonic anhydrase domain is found at 1–146 (CLKRLQPGEM…LNGRTVFEVH (146 aa)).

This sequence belongs to the alpha-carbonic anhydrase family. Zn(2+) serves as cofactor. In terms of tissue distribution, component of the acid-insoluble organic matrix of the aragonitic skeleton (at protein level).

The protein resides in the secreted. The catalysed reaction is hydrogencarbonate + H(+) = CO2 + H2O. In terms of biological role, reversible hydration of carbon dioxide. The chain is Putative carbonic anhydrase from Acropora millepora (Staghorn coral).